The chain runs to 156 residues: Transcription elongation factor GreA (156 aa).

A coiled-coil region spans residues 7-27; sequence MTQEGLDKLKLELENLKLVKR.

The protein belongs to the GreA/GreB family.

In terms of biological role, necessary for efficient RNA polymerase transcription elongation past template-encoded arresting sites. The arresting sites in DNA have the property of trapping a certain fraction of elongating RNA polymerases that pass through, resulting in locked ternary complexes. Cleavage of the nascent transcript by cleavage factors such as GreA or GreB allows the resumption of elongation from the new 3'terminus. GreA releases sequences of 2 to 3 nucleotides. The chain is Transcription elongation factor GreA from Lactococcus lactis subsp. lactis (strain IL1403) (Streptococcus lactis).